The following is a 261-amino-acid chain: Kallikrein 1-related peptidase b11 (261 aa).

The first 18 residues, 1 to 18 (MWFLILFLALSLGGIDAA), serve as a signal peptide directing secretion. Positions 19–24 (PPVQSR) are cleaved as a propeptide — activation peptide. In terms of domain architecture, Peptidase S1 spans 25–258 (IVGGFNCEKN…FTNWIKDTMA (234 aa)). Intrachain disulfides connect cysteine 31–cysteine 173, cysteine 50–cysteine 66, cysteine 152–cysteine 219, cysteine 184–cysteine 198, and cysteine 209–cysteine 234. Histidine 65 acts as the Charge relay system in catalysis. N-linked (GlcNAc...) asparagine glycosylation occurs at asparagine 102. Aspartate 120 serves as the catalytic Charge relay system. Serine 213 (charge relay system) is an active-site residue.

This sequence belongs to the peptidase S1 family. Kallikrein subfamily.

It catalyses the reaction Preferential cleavage of Arg-|-Xaa bonds in small molecule substrates. Highly selective action to release kallidin (lysyl-bradykinin) from kininogen involves hydrolysis of Met-|-Xaa or Leu-|-Xaa.. Glandular kallikreins cleave Met-Lys and Arg-Ser bonds in kininogen to release Lys-bradykinin. The protein is Kallikrein 1-related peptidase b11 (Klk1b11) of Mus musculus (Mouse).